Reading from the N-terminus, the 339-residue chain is MAKRHLTRRQSWRIEKIQEERAARAARRESRAVEELEGGDLGPEQTGQVIAHFGVQVEVESADGQVSRCHLRANLPALVTGDQVVWRAGNQGIGVIVAQLPRRSELCRPDMRGLLKPVAANVDRIVIVFAPRPEPHANLIDRYLIAAEHAGIQPLLLLNKADLVDESNAEGIDALLNVYRTLGYPLIEVSAFNGLAMDELRGALDGHVSVFVGQSGVGKSSLVNALLPGVDTRVGDLSTVTGKGTHTTTTARLFHFPGGGDLIDSPGIREFGLGHVSRDDVEAGFIEFRDLLGHCRFRDCKHDREPGCALLQALEDGRIMPQRMASYRHILASMPETDY.

Positions 111-271 (MRGLLKPVAA…LIDSPGIREF (161 aa)) constitute a CP-type G domain. Residues 159-162 (NKAD) and 213-221 (GQSGVGKSS) each bind GTP. The Zn(2+) site is built by Cys295, Cys300, His302, and Cys308.

Belongs to the TRAFAC class YlqF/YawG GTPase family. RsgA subfamily. In terms of assembly, monomer. Associates with 30S ribosomal subunit, binds 16S rRNA. Requires Zn(2+) as cofactor.

Its subcellular location is the cytoplasm. Functionally, one of several proteins that assist in the late maturation steps of the functional core of the 30S ribosomal subunit. Helps release RbfA from mature subunits. May play a role in the assembly of ribosomal proteins into the subunit. Circularly permuted GTPase that catalyzes slow GTP hydrolysis, GTPase activity is stimulated by the 30S ribosomal subunit. This Pseudomonas aeruginosa (strain ATCC 15692 / DSM 22644 / CIP 104116 / JCM 14847 / LMG 12228 / 1C / PRS 101 / PAO1) protein is Small ribosomal subunit biogenesis GTPase RsgA.